The primary structure comprises 269 residues: 2-dehydro-3-deoxyphosphooctonate aldolase (269 aa).

The protein belongs to the KdsA family.

The protein resides in the cytoplasm. The enzyme catalyses D-arabinose 5-phosphate + phosphoenolpyruvate + H2O = 3-deoxy-alpha-D-manno-2-octulosonate-8-phosphate + phosphate. It participates in carbohydrate biosynthesis; 3-deoxy-D-manno-octulosonate biosynthesis; 3-deoxy-D-manno-octulosonate from D-ribulose 5-phosphate: step 2/3. The protein operates within bacterial outer membrane biogenesis; lipopolysaccharide biosynthesis. The polypeptide is 2-dehydro-3-deoxyphosphooctonate aldolase (Chlamydia trachomatis serovar L2 (strain ATCC VR-902B / DSM 19102 / 434/Bu)).